A 370-amino-acid chain; its full sequence is Peptide chain release factor 1 (370 aa).

An N5-methylglutamine modification is found at Gln-239.

It belongs to the prokaryotic/mitochondrial release factor family. In terms of processing, methylated by PrmC. Methylation increases the termination efficiency of RF1.

It is found in the cytoplasm. Functionally, peptide chain release factor 1 directs the termination of translation in response to the peptide chain termination codons UAG and UAA. This is Peptide chain release factor 1 from Bacteroides thetaiotaomicron (strain ATCC 29148 / DSM 2079 / JCM 5827 / CCUG 10774 / NCTC 10582 / VPI-5482 / E50).